The chain runs to 426 residues: Putative phosphate permease CPn_0680/CP_0067/CPj0680/CpB0707 (426 aa).

Helical transmembrane passes span 1–21 (MLPLIIFVLLCGFYTSWNIGA), 42–62 (AVVIAAIFEFFGALLLGDRVA), 87–107 (TAALLATGVWLQLASFFGWPV), 112–132 (SIVGAVIGFGLVLGKGTIIYW), 137–157 (IILISWILSPFMGGCVAYLIF), 180–200 (FLAALVIMTLGTVMISGGVIL), 207–227 (WAVSGVLVCGLLSYIITFYYV), 260–280 (LVVERIFAYLQIIVACFMAFA), 313–333 (LMAFGGIGLVIGLAIWGWRVI), 364–384 (ILGLPISTTHVVVGAVLGIGL), and 399–419 (IVLSWFITLPAGALLSILFFF).

The protein belongs to the inorganic phosphate transporter (PiT) (TC 2.A.20) family.

The protein resides in the cell membrane. In terms of biological role, potential transporter for phosphate. In Chlamydia pneumoniae (Chlamydophila pneumoniae), this protein is Putative phosphate permease CPn_0680/CP_0067/CPj0680/CpB0707.